Here is a 205-residue protein sequence, read N- to C-terminus: MHQPHDLQILPTPVIRLIEELSRLPGVGPKTASRLTFFLLRAPDELPRALANALIGLKQQVQLCSRCYFITQNDLCAICANPARDQRIVCVVEEPLDVVAIERTGVYRGLYHVLHGRIAPLEGMNREDIYFDELLDRVRAEPIDEVIIATNPNLEGEATAFHLQRALAPLGARVTRLARGLPTGGDLEWADPGTLGSALEGRREM.

The C4-type zinc-finger motif lies at 64 to 79 (CSRCYFITQNDLCAIC). A Toprim domain is found at 87–182 (RIVCVVEEPL…RVTRLARGLP (96 aa)).

It belongs to the RecR family.

In terms of biological role, may play a role in DNA repair. It seems to be involved in an RecBC-independent recombinational process of DNA repair. It may act with RecF and RecO. This is Recombination protein RecR from Roseiflexus castenholzii (strain DSM 13941 / HLO8).